A 169-amino-acid polypeptide reads, in one-letter code: Protein YABBY 7 (169 aa).

Residues 21–48 (CSFCATVLLVSVPCSSVLRVVAVQCGHC) form a C4-type zinc finger. The interval 63-122 (SASIELTPQELDAGPPPGEYSDESSGDDREGRDAEDDAPAPAAAAVANKPPGRKQRTPSA) is disordered.

It belongs to the YABBY family. In terms of tissue distribution, expressed in leaf sheaths and flowers.

It localises to the nucleus. The chain is Protein YABBY 7 (YAB7) from Oryza sativa subsp. japonica (Rice).